The primary structure comprises 210 residues: Large ribosomal subunit protein uL4 (210 aa).

A disordered region spans residues 41-79; it reads MANARQGTASTKTRAEVRGGGRKPWRQKGTGRARAGSNR. Positions 43–52 are enriched in polar residues; the sequence is NARQGTASTK. The span at 60–71 shows a compositional bias: basic residues; the sequence is GGRKPWRQKGTG.

The protein belongs to the universal ribosomal protein uL4 family. Part of the 50S ribosomal subunit.

One of the primary rRNA binding proteins, this protein initially binds near the 5'-end of the 23S rRNA. It is important during the early stages of 50S assembly. It makes multiple contacts with different domains of the 23S rRNA in the assembled 50S subunit and ribosome. Its function is as follows. Forms part of the polypeptide exit tunnel. The polypeptide is Large ribosomal subunit protein uL4 (Cyanothece sp. (strain PCC 7425 / ATCC 29141)).